The following is a 417-amino-acid chain: Serine hydroxymethyltransferase (417 aa).

(6S)-5,6,7,8-tetrahydrofolate is bound by residues leucine 121 and 125 to 127 (GHL). Lysine 229 bears the N6-(pyridoxal phosphate)lysine mark. 355–357 (SPF) lines the (6S)-5,6,7,8-tetrahydrofolate pocket.

It belongs to the SHMT family. As to quaternary structure, homodimer. The cofactor is pyridoxal 5'-phosphate.

The protein resides in the cytoplasm. It catalyses the reaction (6R)-5,10-methylene-5,6,7,8-tetrahydrofolate + glycine + H2O = (6S)-5,6,7,8-tetrahydrofolate + L-serine. Its pathway is one-carbon metabolism; tetrahydrofolate interconversion. It participates in amino-acid biosynthesis; glycine biosynthesis; glycine from L-serine: step 1/1. Its function is as follows. Catalyzes the reversible interconversion of serine and glycine with tetrahydrofolate (THF) serving as the one-carbon carrier. This reaction serves as the major source of one-carbon groups required for the biosynthesis of purines, thymidylate, methionine, and other important biomolecules. Also exhibits THF-independent aldolase activity toward beta-hydroxyamino acids, producing glycine and aldehydes, via a retro-aldol mechanism. The protein is Serine hydroxymethyltransferase of Shewanella sp. (strain MR-4).